The following is a 164-amino-acid chain: uncharacterized protein (164 aa).

A disordered region spans residues 107–136; it reads QSESGGSGSNSRSSSDTTEPTDPPAPVRKT.

This is an uncharacterized protein from Escherichia coli (Bacteriophage T4).